Reading from the N-terminus, the 349-residue chain is N-acetyltaurine hydrolase (349 aa).

6 residues coordinate a divalent metal cation: His-26, His-28, Glu-169, His-201, His-230, and Asp-298.

The protein belongs to the metallo-dependent hydrolases superfamily. Phosphotriesterase family. It depends on a divalent metal cation as a cofactor.

It localises to the cytoplasm. It is found in the cytosol. It catalyses the reaction N-acetyltaurine + H2O = taurine + acetate. It carries out the reaction N-propanoyltaurine + H2O = propanoate + taurine. The enzyme catalyses N-acetyl-L-methionine + H2O = L-methionine + acetate. The catalysed reaction is N-acetyl-L-isoleucine + H2O = L-isoleucine + acetate. It catalyses the reaction N-acetyl-L-leucine + H2O = L-leucine + acetate. It carries out the reaction N-acetyl-L-valine + H2O = L-valine + acetate. Functionally, N-acetyltaurine hydrolase that catalyzes the hydrolysis of N-acetyltaurine into taurine and acetate. PTER also acts on other N-acetyl amino acids (Met, Ile, Leu, Val) and N-propionyltaurine, but at lower rates. The chain is N-acetyltaurine hydrolase (pter) from Salmo salar (Atlantic salmon).